Reading from the N-terminus, the 578-residue chain is Protein O-linked-mannose beta-1,4-N-acetylglucosaminyltransferase 2 (578 aa).

Topologically, residues 1–4 are cytoplasmic; it reads MNLP. A helical; Signal-anchor for type II membrane protein membrane pass occupies residues 5-25; sequence AVLNGLLVSVVAALLWKYVRL. At 26-578 the chain is on the lumenal side; sequence VEHTSQLEEE…PFADVLICKT (553 aa). N98, N275, and N541 each carry an N-linked (GlcNAc...) asparagine glycan. One can recognise a Fibronectin type-III domain in the interval 482–578; that stretch reads RVREPKCQTS…PFADVLICKT (97 aa).

It belongs to the glycosyltransferase 61 family.

The protein resides in the endoplasmic reticulum membrane. It carries out the reaction 3-O-(alpha-D-mannosyl)-L-threonyl-[protein] + UDP-N-acetyl-alpha-D-glucosamine = 3-O-(N-acetyl-beta-D-glucosaminyl-(1-&gt;4)-alpha-D-mannosyl)-L-threonyl-[protein] + UDP + H(+). It functions in the pathway protein modification; protein glycosylation. Its function is as follows. O-linked mannose beta-1,4-N-acetylglucosaminyltransferase that transfers UDP-N-acetyl-D-glucosamine to the 4-position of the mannose to generate N-acetyl-D-glucosamine-beta-1,4-O-D-mannosylprotein. Involved in the biosynthesis of the phosphorylated O-mannosyl trisaccharide (N-acetylgalactosamine-beta-3-N-acetylglucosamine-beta-4-(phosphate-6-)mannose), a carbohydrate structure present in alpha-dystroglycan (DAG1), which is required for binding laminin G-like domain-containing extracellular proteins with high affinity. The protein is Protein O-linked-mannose beta-1,4-N-acetylglucosaminyltransferase 2 (pomgnt2) of Danio rerio (Zebrafish).